Consider the following 286-residue polypeptide: Elongation factor Ts (286 aa).

Positions threonine 82 to valine 85 are involved in Mg(2+) ion dislocation from EF-Tu.

The protein belongs to the EF-Ts family.

The protein resides in the cytoplasm. Functionally, associates with the EF-Tu.GDP complex and induces the exchange of GDP to GTP. It remains bound to the aminoacyl-tRNA.EF-Tu.GTP complex up to the GTP hydrolysis stage on the ribosome. The chain is Elongation factor Ts from Desulfovibrio desulfuricans (strain ATCC 27774 / DSM 6949 / MB).